The following is a 184-amino-acid chain: Ribosome-recycling factor (184 aa).

The protein belongs to the RRF family.

It is found in the cytoplasm. Its function is as follows. Responsible for the release of ribosomes from messenger RNA at the termination of protein biosynthesis. May increase the efficiency of translation by recycling ribosomes from one round of translation to another. The sequence is that of Ribosome-recycling factor from Aquifex aeolicus (strain VF5).